The sequence spans 367 residues: 3-dehydroquinate synthase (367 aa).

Residues 69–74 (DGEAFK), 103–107 (GVIGD), 127–128 (TT), Lys-140, and Lys-149 contribute to the NAD(+) site. The Zn(2+) site is built by Glu-182, His-245, and His-262.

It belongs to the sugar phosphate cyclases superfamily. Dehydroquinate synthase family. Requires Co(2+) as cofactor. It depends on Zn(2+) as a cofactor. NAD(+) is required as a cofactor.

It localises to the cytoplasm. It carries out the reaction 7-phospho-2-dehydro-3-deoxy-D-arabino-heptonate = 3-dehydroquinate + phosphate. Its pathway is metabolic intermediate biosynthesis; chorismate biosynthesis; chorismate from D-erythrose 4-phosphate and phosphoenolpyruvate: step 2/7. Its function is as follows. Catalyzes the conversion of 3-deoxy-D-arabino-heptulosonate 7-phosphate (DAHP) to dehydroquinate (DHQ). The sequence is that of 3-dehydroquinate synthase from Ectopseudomonas mendocina (strain ymp) (Pseudomonas mendocina).